We begin with the raw amino-acid sequence, 382 residues long: Succinyl-diaminopimelate desuccinylase (382 aa).

His72 lines the Zn(2+) pocket. Residue Asp74 is part of the active site. Residue Asp105 participates in Zn(2+) binding. Glu139 serves as the catalytic Proton acceptor. Residues Glu140, Glu168, and His354 each contribute to the Zn(2+) site.

Belongs to the peptidase M20A family. DapE subfamily. Homodimer. It depends on Zn(2+) as a cofactor. Requires Co(2+) as cofactor.

It carries out the reaction N-succinyl-(2S,6S)-2,6-diaminopimelate + H2O = (2S,6S)-2,6-diaminopimelate + succinate. Its pathway is amino-acid biosynthesis; L-lysine biosynthesis via DAP pathway; LL-2,6-diaminopimelate from (S)-tetrahydrodipicolinate (succinylase route): step 3/3. Its function is as follows. Catalyzes the hydrolysis of N-succinyl-L,L-diaminopimelic acid (SDAP), forming succinate and LL-2,6-diaminopimelate (DAP), an intermediate involved in the bacterial biosynthesis of lysine and meso-diaminopimelic acid, an essential component of bacterial cell walls. The polypeptide is Succinyl-diaminopimelate desuccinylase (Shewanella amazonensis (strain ATCC BAA-1098 / SB2B)).